A 25-amino-acid chain; its full sequence is Cysteine protease inhibitor 2 (25 aa).

The protein belongs to the protease inhibitor I3 (leguminous Kunitz-type inhibitor) family. Cortex of tuber.

In terms of biological role, inhibitor of subtilisin. Inhibits moderately trypsin and chymotrypsin (serine proteases). May protect the plant by inhibiting proteases of invading organisms. The chain is Cysteine protease inhibitor 2 from Solanum tuberosum (Potato).